Here is a 449-residue protein sequence, read N- to C-terminus: MIVLTIEEILKEVLNEIKPSKEDMEKLQLKANEIIDKIWEIVRENSYPILEVLLVGSSARNTNLKDDYDIDIFVLFDKSVSEDELEEIGLKIGTEAIKRLNGSYNINYASHPYVNGEVDGYEVDIVPCYKIDFGEKIISAVDRTPLHHKFLISRLNERLCDEVRLLKAFLKSLGLYGSDVKTKGFSGYLCELLILHYGSFINLLKEAQNWRIGKKIILKDIFEIYKDVDINKLKKFDEPFIVYDPVDLNRNVASPLSKDNFCRFIFYSRQFLKNPSIEFFKDYAKKLEEILENREHGYRLILKIPRENVVDDIIYPQMEKLQKSINKVIVKNEFVILNSKCFADDNYCYLYWEFLVYELPKIALREGPPVFEKERAERFLKKYGKVFIRDCKLFAYTEREYSHIIDLFKDIVNGNLQNISIPKYVNPRNGKIIELNSHGEHKQFNKECQ.

Positions 57 and 60 each coordinate ATP. S57 and R60 together coordinate CTP. Mg(2+) contacts are provided by D69, D71, and D124. 3 residues coordinate ATP: H147, K167, and Y176. Residues H147, K167, and Y176 each contribute to the CTP site.

Belongs to the tRNA nucleotidyltransferase/poly(A) polymerase family. Archaeal CCA-adding enzyme subfamily. Homodimer. Requires Mg(2+) as cofactor.

It catalyses the reaction a tRNA precursor + 2 CTP + ATP = a tRNA with a 3' CCA end + 3 diphosphate. The catalysed reaction is a tRNA with a 3' CCA end + 2 CTP + ATP = a tRNA with a 3' CCACCA end + 3 diphosphate. Its function is as follows. Catalyzes the addition and repair of the essential 3'-terminal CCA sequence in tRNAs without using a nucleic acid template. Adds these three nucleotides in the order of C, C, and A to the tRNA nucleotide-73, using CTP and ATP as substrates and producing inorganic pyrophosphate. tRNA 3'-terminal CCA addition is required both for tRNA processing and repair. Also involved in tRNA surveillance by mediating tandem CCA addition to generate a CCACCA at the 3' terminus of unstable tRNAs. While stable tRNAs receive only 3'-terminal CCA, unstable tRNAs are marked with CCACCA and rapidly degraded. The sequence is that of CCA-adding enzyme from Methanocaldococcus jannaschii (strain ATCC 43067 / DSM 2661 / JAL-1 / JCM 10045 / NBRC 100440) (Methanococcus jannaschii).